A 278-amino-acid polypeptide reads, in one-letter code: Large ribosomal subunit protein uL2 (278 aa).

Positions 201–278 (HGNINDGKAG…IMRSRHQRKK (78 aa)) are disordered. The segment covering 210–221 (GRSRWRGKKPHV) has biased composition (basic residues).

It belongs to the universal ribosomal protein uL2 family. Part of the 50S ribosomal subunit. Forms a bridge to the 30S subunit in the 70S ribosome.

In terms of biological role, one of the primary rRNA binding proteins. Required for association of the 30S and 50S subunits to form the 70S ribosome, for tRNA binding and peptide bond formation. It has been suggested to have peptidyltransferase activity; this is somewhat controversial. Makes several contacts with the 16S rRNA in the 70S ribosome. This chain is Large ribosomal subunit protein uL2, found in Rhizobium rhizogenes (strain K84 / ATCC BAA-868) (Agrobacterium radiobacter).